A 432-amino-acid polypeptide reads, in one-letter code: MSKPSYKVADISLAEWGRKAIIIAENEMPGLMACRKKYGPSKPLKGARITGCLHMTVQTAVLIETLVELGAQVQWSSCNIFSTQDNAAAAIAATGVPVYAWKGETDEEYMWCIEQTLVFPDGQPLNMILDDGGDLTNLVHEKFPQYLKNIKGLSEETTTGVHNLYKMFKEGRLGVPAINVNDSVTKSKFDNLYGCRESLIDGIKRATDVMIAGKVCCVAGYGDVGKGCAQALKGFGGRVIVTEVDPINALQAAMEGYEVTTMEEASKEASIFVTTTGCRDIITSVHLQQMPDDAIVCNIGHFDIEIDVDWLNANAKEKVNVKPQVDRYTMQSGKHIILLAEGRLVNLGCAHGHPSFVMSNSFTNQVLAQIELWTKSDKYAVGVHVLPKILDEEVASLHLEKLGVKLTKLTEKQATYLGVSQTGPFKPDHYRY.

Thr56, Asp131, and Glu156 together coordinate substrate. An NAD(+)-binding site is contributed by 157-159; the sequence is TTT. Substrate contacts are provided by Lys186 and Asp190. NAD(+) is bound by residues 222–227, Glu243, Asn248, 299–301, Asn346, His353, Lys426, 426–430, and Tyr430; these read GDVGKG, IGH, and KPDHY.

Belongs to the adenosylhomocysteinase family. Interacts with AhcyL1; the interaction may negatively regulate Ahcy catalytic activity. It depends on NAD(+) as a cofactor.

It carries out the reaction S-adenosyl-L-homocysteine + H2O = L-homocysteine + adenosine. Its pathway is amino-acid biosynthesis; L-homocysteine biosynthesis; L-homocysteine from S-adenosyl-L-homocysteine: step 1/1. Adenosylhomocysteine is a competitive inhibitor of S-adenosyl-L-methionine-dependent methyl transferase reactions; therefore adenosylhomocysteinase may play a key role in the control of methylations via regulation of the intracellular concentration of adenosylhomocysteine. This Drosophila melanogaster (Fruit fly) protein is Adenosylhomocysteinase.